Consider the following 550-residue polypeptide: NAD(P)H-quinone oxidoreductase chain 4 3 (550 aa).

14 helical membrane-spanning segments follow: residues 5-25 (FPWLTAIIALPALSTLLIPLL), 36-56 (YALIVGLVDFALMCFAFWQHF), 86-106 (ISAPLVLLAGFVTTLAMFSAW), 114-134 (LFYALMLLLYSAQIGVFVAKD), 135-155 (LFLFFLMWEIELIPVYLLVCI), 168-188 (FLLYTAAASIFILVAALALSL), 212-232 (MWLYAGLLVSFGVKLAIFPLH), 243-263 (SSPVSMLLAGVLLKMGGYGLM), 277-297 (FAPLLVILGVVNIVYGAFSSF), 311-331 (VSHMGFVLIGIASFTDLGING), 332-352 (AMLQMLSHGLIASVLFFLAGV), 375-395 (VFAMFTVGALASLALPGMSGF), 418-438 (ITVFLAAVGVILTPIYLLSML), and 489-509 (IFIATCFTVLIIGVGLYPKLL).

The protein belongs to the complex I subunit 4 family.

It is found in the cellular thylakoid membrane. It carries out the reaction a plastoquinone + NADH + (n+1) H(+)(in) = a plastoquinol + NAD(+) + n H(+)(out). The enzyme catalyses a plastoquinone + NADPH + (n+1) H(+)(in) = a plastoquinol + NADP(+) + n H(+)(out). Functionally, NDH-1 shuttles electrons from NAD(P)H, via FMN and iron-sulfur (Fe-S) centers, to quinones in the respiratory chain. The immediate electron acceptor for the enzyme in this species is believed to be plastoquinone. Couples the redox reaction to proton translocation (for every two electrons transferred, four hydrogen ions are translocated across the cytoplasmic membrane), and thus conserves the redox energy in a proton gradient. The protein is NAD(P)H-quinone oxidoreductase chain 4 3 of Picosynechococcus sp. (strain ATCC 27264 / PCC 7002 / PR-6) (Agmenellum quadruplicatum).